The following is a 201-amino-acid chain: Superoxide dismutase [Mn] (201 aa).

4 residues coordinate Mn(2+): His27, His81, Asp163, and His167.

It belongs to the iron/manganese superoxide dismutase family. In terms of assembly, homodimer. Mn(2+) is required as a cofactor.

The protein resides in the secreted. The catalysed reaction is 2 superoxide + 2 H(+) = H2O2 + O2. Destroys superoxide anion radicals which are normally produced within the cells and which are toxic to biological systems. This is Superoxide dismutase [Mn] (sodA) from Streptococcus pyogenes serotype M1.